The chain runs to 462 residues: 3-ketoacyl-CoA thiolase 2, peroxisomal (462 aa).

The transit peptide at 1-34 (MEKAIERQRVLLEHLRPSSSSSHNYEASLSASAC) directs the protein to the peroxisome. C138 functions as the Acyl-thioester intermediate in the catalytic mechanism. C138 and C192 are oxidised to a cystine. Residues H393 and C425 each act as proton acceptor in the active site.

This sequence belongs to the thiolase-like superfamily. Thiolase family. In terms of assembly, forms homodimers. In terms of tissue distribution, accumulates in etiolated cotyledons and in seedlings, also present in roots, flowers and siliques (at protein level). High levels in wounded leaves.

It localises to the peroxisome. The protein localises to the glyoxysome. It catalyses the reaction an acyl-CoA + acetyl-CoA = a 3-oxoacyl-CoA + CoA. It functions in the pathway lipid metabolism; fatty acid metabolism. In terms of biological role, involved in long chain fatty-acid beta-oxidation prior to gluconeogenesis during germination and subsequent seedling growth. Confers sensitivity to 2,4-dichlorophenoxybutiric acid (2,4-DB). Required for local and systemic induction of jasmonic acid (JA) biosynthesis after wounding. Seems to be involved in JA biosynthesis during senescence. May be involved in the positive regulation of abscisic acid-activated signaling pathway. This chain is 3-ketoacyl-CoA thiolase 2, peroxisomal (PED1), found in Arabidopsis thaliana (Mouse-ear cress).